The primary structure comprises 117 residues: UPF0295 protein Bsph_0336 (117 aa).

2 helical membrane-spanning segments follow: residues 13–33 (SFAL…IFFK) and 37–57 (ILVL…TVVY).

Belongs to the UPF0295 family.

Its subcellular location is the cell membrane. This Lysinibacillus sphaericus (strain C3-41) protein is UPF0295 protein Bsph_0336.